A 262-amino-acid chain; its full sequence is Pyridoxine 5'-phosphate synthase (262 aa).

Residue Asn6 participates in 3-amino-2-oxopropyl phosphate binding. A 1-deoxy-D-xylulose 5-phosphate-binding site is contributed by 8-9; the sequence is DH. Arg17 provides a ligand contact to 3-amino-2-oxopropyl phosphate. His43 (proton acceptor) is an active-site residue. 2 residues coordinate 1-deoxy-D-xylulose 5-phosphate: Arg45 and His50. Glu70 (proton acceptor) is an active-site residue. Residue Thr102 coordinates 1-deoxy-D-xylulose 5-phosphate. The active-site Proton donor is His215. 3-amino-2-oxopropyl phosphate is bound by residues Gly216 and 237-238; that span reads GH.

Belongs to the PNP synthase family. As to quaternary structure, homooctamer; tetramer of dimers.

The protein localises to the cytoplasm. It catalyses the reaction 3-amino-2-oxopropyl phosphate + 1-deoxy-D-xylulose 5-phosphate = pyridoxine 5'-phosphate + phosphate + 2 H2O + H(+). The protein operates within cofactor biosynthesis; pyridoxine 5'-phosphate biosynthesis; pyridoxine 5'-phosphate from D-erythrose 4-phosphate: step 5/5. Functionally, catalyzes the complicated ring closure reaction between the two acyclic compounds 1-deoxy-D-xylulose-5-phosphate (DXP) and 3-amino-2-oxopropyl phosphate (1-amino-acetone-3-phosphate or AAP) to form pyridoxine 5'-phosphate (PNP) and inorganic phosphate. The polypeptide is Pyridoxine 5'-phosphate synthase (Helicobacter acinonychis (strain Sheeba)).